Reading from the N-terminus, the 306-residue chain is Bifunctional protein FolD (306 aa).

NADP(+) contacts are provided by residues 164-166 (GRS), S189, and T230.

It belongs to the tetrahydrofolate dehydrogenase/cyclohydrolase family. In terms of assembly, homodimer.

The catalysed reaction is (6R)-5,10-methylene-5,6,7,8-tetrahydrofolate + NADP(+) = (6R)-5,10-methenyltetrahydrofolate + NADPH. It carries out the reaction (6R)-5,10-methenyltetrahydrofolate + H2O = (6R)-10-formyltetrahydrofolate + H(+). It participates in one-carbon metabolism; tetrahydrofolate interconversion. In terms of biological role, catalyzes the oxidation of 5,10-methylenetetrahydrofolate to 5,10-methenyltetrahydrofolate and then the hydrolysis of 5,10-methenyltetrahydrofolate to 10-formyltetrahydrofolate. This Solibacter usitatus (strain Ellin6076) protein is Bifunctional protein FolD.